A 689-amino-acid polypeptide reads, in one-letter code: MSEKTFLVEIGTEELPPKALRSLAESFAANFTAELDAAGLAHGVVSWFAAPRRLALKVANLAASQPDREVEKRGPAVSAAFDAEGNPSKAAEGWARGCGITVDQAERLVTDKGEWLMYRAHVKGESAQALLPNMVSTALSKLPIPKLMRWGASDVQFVRPVHTVTLLLDDEVLPATILGIQSDRVIRGHRFMGEPEFTIDHADQYPQILLERGKVIADYNARKAKIQQDAEAAAAKIGGNADLSDSLLEEVTSLVEWPVVLTAKFEEKFLAVPAEALVYTMKGDQKYFPVYGTDGKLLPNFIFVANIESKDPRQIISGNEKVVRPRLADAEFFFNTDRKKRLEDHLPRLETVLFQQQLGTLRDKTDRIQALSGWIASQIGADVNHATRAGLLSKCDLMTNMVFEFTDTQGVMGMHYARHDGESEDVAVALNEQYMPRFAGDALPSSLVACAVAIADKMDTLAGIFGIGQHPKGDKDPFALRRAALGVLRIIVEKNLPLDLQTLTEEAVRLYGSKLTNAKVVDDVVDFMLGRFRAWYQDEGYSVDTIQAVLANRPTRPADFDARMKAVSHFRTLDEAVALAAANKRVSNILAKATEPLNDEVHASVLKEDPEIRLALQVAVMRDKLQPLFAEGRYQEALVELAQLREPVDEFFEKVMVNADDAQVRINRLTLLSKLRALFLQVADISLLQ.

This sequence belongs to the class-II aminoacyl-tRNA synthetase family. Tetramer of two alpha and two beta subunits.

Its subcellular location is the cytoplasm. It carries out the reaction tRNA(Gly) + glycine + ATP = glycyl-tRNA(Gly) + AMP + diphosphate. The polypeptide is Glycine--tRNA ligase beta subunit (Cronobacter sakazakii (strain ATCC BAA-894) (Enterobacter sakazakii)).